The following is a 753-amino-acid chain: MSGSYTPSPGGPFSALTASMWPQDILAKYTQKEQTVEQPEFRYDEFGFRVDKEDGAEPNSSKLLGIPLTEDPQQRLRWQAHLEFTHNHDVGDLTWDKIDVTLPHSDKLRSLVLAGIPHSMRPQLWMRLSGALQKKQNSEMTYKDIGRNSSNDDTLAAKQIEKDLLRTMPSNACFSNLQSVGVPRLRRVLRGLAWLFPDIGYCQGTGMVAACLLLFLEEEDAFWMMATIVEDLVPVSYFNTTLVGVQTDQRVLRHLIVQYLPRLDKLLQEHDIELSLITLHWFLTAFASVVHIKLLLRIWDFFFYQGSLVLFQTTLGMLKMKEEELIQSENSASIFNTLSDIPSQIEEADVLLREAMLISGTLTEVMIEAQRRKHLAYLIADQGQLLNSTAAVANLSKIMRRQSQRRKSAITTLLFGDDNFEALKSKNIKQTALVADLREAILQVARHFQYTDPKNCSIDLTPDYTMESHQRDHENYVSCSQSRRRRAKALLDFERHDDDELGFRKNDIITIISQKDEHCWVGELNGLRGWFPAKFVDILDERSKEYSVAGDDSVTEGITDLIRGTLSPSIKSIFEHGLKKPSLLGGPCHPWLFIEEAASREVERDFDSVYSRLVLCKTYRLDEDGKVLTPEELLYRGVQSVNVSHDAAHAQMDVKLRSLISIGLNEQVLHLWLEVLCSSLPTVEKWYQPWSFLRSPGWVQIKCELRVLSKFAFSLSPDWELPVKREDKEKKPLKEGVQDMLVKHHLFSWDIDG.

One can recognise a Rab-GAP TBC domain in the interval 115 to 306 (GIPHSMRPQL…RIWDFFFYQG (192 aa)). The SH3 domain maps to 482-541 (SRRRRAKALLDFERHDDDELGFRKNDIITIISQKDEHCWVGELNGLRGWFPAKFVDILDE). The RUN domain maps to 557–720 (GITDLIRGTL…FAFSLSPDWE (164 aa)).

It belongs to the small G protein signaling modulator family.

The chain is Small G protein signaling modulator 3 homolog (sgsm3) from Xenopus laevis (African clawed frog).